A 270-amino-acid polypeptide reads, in one-letter code: Putative pyruvate, phosphate dikinase regulatory protein 2 (270 aa).

Residue 151–158 (GVSRTSKT) participates in ADP binding.

The protein belongs to the pyruvate, phosphate/water dikinase regulatory protein family. PDRP subfamily.

The catalysed reaction is N(tele)-phospho-L-histidyl/L-threonyl-[pyruvate, phosphate dikinase] + ADP = N(tele)-phospho-L-histidyl/O-phospho-L-threonyl-[pyruvate, phosphate dikinase] + AMP + H(+). It carries out the reaction N(tele)-phospho-L-histidyl/O-phospho-L-threonyl-[pyruvate, phosphate dikinase] + phosphate + H(+) = N(tele)-phospho-L-histidyl/L-threonyl-[pyruvate, phosphate dikinase] + diphosphate. Functionally, bifunctional serine/threonine kinase and phosphorylase involved in the regulation of the pyruvate, phosphate dikinase (PPDK) by catalyzing its phosphorylation/dephosphorylation. The protein is Putative pyruvate, phosphate dikinase regulatory protein 2 of Listeria monocytogenes serotype 4b (strain F2365).